Consider the following 481-residue polypeptide: Matrilin-3 (481 aa).

Residues 1–27 form the signal peptide; it reads MLLSAPLRHLPGLLLLLWPLLLLPSLA. In terms of domain architecture, VWFA spans 78-253; the sequence is DLVFIIDSSR…GVIEKLSARF (176 aa). Omega-N-methylarginine is present on Arg193. EGF-like domains are found at residues 259–300, 301–342, 343–384, and 385–426; these read ALDQ…KTCS, AIDK…RTCA, ALDK…KTCS, and VRNK…KTCS. 12 disulfide bridges follow: Cys263-Cys274, Cys270-Cys284, Cys286-Cys299, Cys305-Cys316, Cys312-Cys326, Cys328-Cys341, Cys347-Cys358, Cys354-Cys368, Cys370-Cys383, Cys389-Cys400, Cys396-Cys410, and Cys412-Cys425. N-linked (GlcNAc...) asparagine glycosylation is present at Asn321. Ser436 carries the phosphoserine; by FAM20C modification. A coiled-coil region spans residues 451–475; sequence EKVSSHLQKLNTKLDNILKKLKVTE.

Can form homooligomers (monomers, dimers, trimers and tetramers) and heterooligomers with matrilin-1. Interacts with COMP. Component of a complex containing at least CRELD2, MANF, MATN3 and PDIA4. In terms of tissue distribution, strongly expressed in growing skeletal tissue such as epiphyseal growth plate or in bone undergoing growth and remodeling. In the bone, actively synthesized in osteoblasts and osteocytes. Expressed in cartilage of sternum, femur, vertebrae, trachea, articular and epiphyseal cartilage, cartilage of developing bones and bones.

Its subcellular location is the secreted. Major component of the extracellular matrix of cartilage and may play a role in the formation of extracellular filamentous networks. This Mus musculus (Mouse) protein is Matrilin-3 (Matn3).